Here is a 556-residue protein sequence, read N- to C-terminus: ATP synthase subunit alpha 2 (556 aa).

Residue 177-184 (GDRATGKT) participates in ATP binding. The segment at 514–556 (GGHAEDAADDMGGALDGEHASGDATSIAPTPPGGAEAGAPRKR) is disordered. The segment covering 546–556 (GGAEAGAPRKR) has biased composition (low complexity).

It belongs to the ATPase alpha/beta chains family. F-type ATPases have 2 components, CF(1) - the catalytic core - and CF(0) - the membrane proton channel. CF(1) has five subunits: alpha(3), beta(3), gamma(1), delta(1), epsilon(1). CF(0) has three main subunits: a(1), b(2) and c(9-12). The alpha and beta chains form an alternating ring which encloses part of the gamma chain. CF(1) is attached to CF(0) by a central stalk formed by the gamma and epsilon chains, while a peripheral stalk is formed by the delta and b chains.

Its subcellular location is the cell inner membrane. The catalysed reaction is ATP + H2O + 4 H(+)(in) = ADP + phosphate + 5 H(+)(out). Produces ATP from ADP in the presence of a proton gradient across the membrane. The alpha chain is a regulatory subunit. The sequence is that of ATP synthase subunit alpha 2 from Burkholderia thailandensis (strain ATCC 700388 / DSM 13276 / CCUG 48851 / CIP 106301 / E264).